A 195-amino-acid polypeptide reads, in one-letter code: Interferon tau-6 (195 aa).

An N-terminal signal peptide occupies residues 1 to 23 (MAFVLSLLMALVLVSYGPGGSLG). 2 disulfides stabilise this stretch: C24–C122 and C52–C162. A glycan (N-linked (GlcNAc...) asparagine) is linked at N101.

The protein belongs to the alpha/beta interferon family. IFN-alphaII subfamily. In terms of tissue distribution, constitutively and exclusively expressed in the mononuclear cells of the extraembryonic trophectoderm.

The protein resides in the secreted. Its function is as follows. Paracrine hormone primarily responsible for maternal recognition of pregnancy. Interacts with endometrial receptors, probably type I interferon receptors, and blocks estrogen receptor expression, preventing the estrogen-induced increase in oxytocin receptor expression in the endometrium. This results in the suppression of the pulsatile endometrial release of the luteolytic hormone prostaglandin F2-alpha, hindering the regression of the corpus luteum (luteolysis) and therefore a return to ovarian cyclicity. This, and a possible direct effect of IFN-tau on prostaglandin synthesis, leads in turn to continued ovarian progesterone secretion, which stimulates the secretion by the endometrium of the nutrients required for the growth of the conceptus. In summary, displays particularly high antiviral and antiproliferative potency concurrently with particular weak cytotoxicity, high antiluteolytic activity and immunomodulatory properties. In contrast with other IFNs, IFN-tau is not virally inducible. This is Interferon tau-6 (IFNT6) from Ovis aries (Sheep).